Here is a 71-residue protein sequence, read N- to C-terminus: Heat-stable enterotoxin II (71 aa).

Residues 1 to 23 form the signal peptide; sequence MKKNIAFLLASMFVFSIATNAYA. 2 cysteine pairs are disulfide-bonded: cysteine 33–cysteine 71 and cysteine 44–cysteine 59.

Its subcellular location is the secreted. Its function is as follows. Toxin which activates the particulate form of guanylate cyclase and increases cyclic GMP levels within the host intestinal epithelial cells. The polypeptide is Heat-stable enterotoxin II (stiI) (Escherichia coli).